Consider the following 484-residue polypeptide: Glutamate--tRNA ligase (484 aa).

The 'HIGH' region signature appears at 12–22; it reads PSPTGEPHVGT. The 'KMSKS' region motif lies at 253–257; the sequence is KLSKR. Residue Lys-256 coordinates ATP.

This sequence belongs to the class-I aminoacyl-tRNA synthetase family. Glutamate--tRNA ligase type 1 subfamily. As to quaternary structure, monomer.

The protein resides in the cytoplasm. The catalysed reaction is tRNA(Glu) + L-glutamate + ATP = L-glutamyl-tRNA(Glu) + AMP + diphosphate. Catalyzes the attachment of glutamate to tRNA(Glu) in a two-step reaction: glutamate is first activated by ATP to form Glu-AMP and then transferred to the acceptor end of tRNA(Glu). The sequence is that of Glutamate--tRNA ligase from Rhizobium etli (strain CIAT 652).